The sequence spans 69 residues: Bowman-Birk type proteinase inhibitor A2 (69 aa).

4 disulfide bridges follow: C12-C31, C18-C29, C38-C45, and C42-C59.

It belongs to the Bowman-Birk serine protease inhibitor family. In terms of tissue distribution, expressed in bulb (at protein level).

Serine protease inhibitor. In Hyacinthus orientalis (Common hyacinth), this protein is Bowman-Birk type proteinase inhibitor A2.